Here is a 1211-residue protein sequence, read N- to C-terminus: MKENKAFTHLHLHTEYSLLDGANKIKILAKRIKELGMKSVSVTDHGNMFGAIDFYTSMKKEGIKPIIGMEAYIHNDDNLSSKETKQRFHLCLFAKNQEGYENLMFLSSMAYLEGFYYFPRINKKLLREHSKGIIASSACLQGEVNYHLNTNNERNRKYGAKGYDEAKRIACEYQEIFEDDFYLEIMRHGILDQRFIDEQVIKMSLETGLKIIATNDTHYTMPNDAKAQEVAMCVAMGKTLNDKGRLKHSVHEFYIKSPEEMAKLFADIPEALENTQEIADKCVLEIDLKDDKKNPPTPPSFKFTKAYAQNEGLSFEDDASYFAHKAREGLRERLILVPEEKHEQYKERLEKEIEVITNMKFPGYMLIVWDFIRYAKEMGIPVGPGRGSAAGSLVAFALKITDIDPLKYDLLFERFLNPERVSMPDIDTDFCQRRRKEIIEYMIEKYGKYNVAQVITFNKMLAKGVIRDVARVLDMPYKEADDFAKLIPNRLGITLKGYEKNGEFIEGAWELEPKIKELVESNEVAKQVWEYSLNLENLNRNAGVHAAALVVDSQKELWHKTPLFASEKTGGIVTQYSMKYLEPVDLIKFDFLGLKTLTVIDDALKIIKTQHNIDVDFLSLDMDDPKVYKTIQSGDTVGIFQIESGMFQGLNKRLRPSSFEDIIAIIALGRPGPMESGMVDDFVNRKHGVEPIAYAFKELEPILKPTYGTIVYQEQVMQIVQTIGGFSLGEADLIRRAMGKKDAQIMADNKAKFVEGAKNLGHDGQKAANLWDLIVKFAGYGFNKSHSAAYAMITFQTAYLKTYYKHEFMAAMLTSESNKIESVARYIDEVRALEIEVMPPHINSSMQDFSVAEFKNQKGELEKKIVFGLGAVKGVGGEPIKNIIEERAKGDYKSLEDFISRVDFSKLTKKSLEPLVKSGSLDNLGYTRKTMLANLDLICDAGRAKDKANEMMQGGNSLFGAMEGGIKEQVVLDMVDLGEHDAKTLLECEYETLGIHVSGNPLDEFKEEIKGFKNLVKSIDIEELEIGSQAYLLGKIMEVKKKIGKRSGKPYGTADILDRYGKFELMLFEKQLNALEELDINKPLVFKCKIEEQEEVARLRLFEILDLESAREVKIPKARYKDPEKQKEDVREIPPMEMLASSSCSLAIVLENDVKKEFLRQIKESALKHQGKRPLYLIIKDKDKQFKIQSDLMVNEKIKDDFKGLEWRDLA.

The protein belongs to the DNA polymerase type-C family. DnaE subfamily. As to quaternary structure, DNA polymerase III contains a core (composed of alpha, epsilon and theta chains) that associates with a tau subunit. This core dimerizes to form the PolIII' complex. PolIII' associates with the gamma complex (composed of gamma, delta, delta', psi and chi chains) and with the beta chain to form the complete DNA polymerase III complex.

It localises to the cytoplasm. It catalyses the reaction DNA(n) + a 2'-deoxyribonucleoside 5'-triphosphate = DNA(n+1) + diphosphate. DNA polymerase III is a complex, multichain enzyme responsible for most of the replicative synthesis in bacteria. This DNA polymerase also exhibits 3' to 5' exonuclease activity. The alpha chain is the DNA polymerase. The protein is DNA polymerase III subunit alpha (dnaE) of Helicobacter pylori (strain J99 / ATCC 700824) (Campylobacter pylori J99).